Consider the following 505-residue polypeptide: Cyanidin 3-O-glucoside 7-O-glucosyltransferase (acyl-glucose) (505 aa).

The first 25 residues, 1–25 (MCPSFLVTLLLLQLSSLVVVLVVWA), serve as a signal peptide directing secretion. A beta-D-glucoside contacts are provided by residues Gln52, His152, and 197–198 (NE). Glu198 acts as the Proton donor in catalysis. The cysteines at positions 217 and 225 are disulfide-linked. Residues Asn224, Asn229, and Asn324 are each glycosylated (N-linked (GlcNAc...) asparagine). Positions 341 and 403 each coordinate a beta-D-glucoside. Glu403 (nucleophile) is an active-site residue. Asn411 and Asn437 each carry an N-linked (GlcNAc...) asparagine glycan. Residues Trp447 and Tyr463 each contribute to the a beta-D-glucoside site. Residue Asn494 is glycosylated (N-linked (GlcNAc...) asparagine).

It belongs to the glycosyl hydrolase 1 family.

It is found in the vacuole. The enzyme catalyses 1-O-(4-hydroxy-3-methoxybenzoyl)-beta-D-glucose + cyanidin 3-O-beta-D-glucoside = cyanidin 3,7-di-O-beta-D-glucoside + vanillate. Its pathway is pigment biosynthesis; anthocyanin biosynthesis. Its function is as follows. Beta-glycosidase that catalyzes the transfer of glucose moiety to anthocyanidin 3-glucoside at the 7 position. Anthocyanins are ubiquitous colored pigments that are responsible for variations in petal color. The polypeptide is Cyanidin 3-O-glucoside 7-O-glucosyltransferase (acyl-glucose) (AA7GT) (Delphinium grandiflorum (Siberian larkspur)).